The chain runs to 252 residues: Chitooligosaccharide deacetylase (252 aa).

His-61 and His-125 together coordinate Mg(2+).

This sequence belongs to the YdjC deacetylase family. ChbG subfamily. As to quaternary structure, homodimer. The cofactor is Mg(2+).

It is found in the cytoplasm. It carries out the reaction N,N'-diacetylchitobiose + H2O = N-acetyl-beta-D-glucosaminyl-(1-&gt;4)-D-glucosamine + acetate. The catalysed reaction is diacetylchitobiose-6'-phosphate + H2O = N'-monoacetylchitobiose-6'-phosphate + acetate. Its pathway is glycan degradation; chitin degradation. Involved in the degradation of chitin. ChbG is essential for growth on the acetylated chitooligosaccharides chitobiose and chitotriose but is dispensable for growth on cellobiose and chitosan dimer, the deacetylated form of chitobiose. Deacetylation of chitobiose-6-P and chitotriose-6-P is necessary for both the activation of the chb promoter by the regulatory protein ChbR and the hydrolysis of phosphorylated beta-glucosides by the phospho-beta-glucosidase ChbF. Catalyzes the removal of only one acetyl group from chitobiose-6-P to yield monoacetylchitobiose-6-P, the inducer of ChbR and the substrate of ChbF. This chain is Chitooligosaccharide deacetylase, found in Citrobacter koseri (strain ATCC BAA-895 / CDC 4225-83 / SGSC4696).